We begin with the raw amino-acid sequence, 157 residues long: SsrA-binding protein (157 aa).

Over residues 134–151 the composition is skewed to basic and acidic residues; the sequence is HDKRETEKKRDWSKEKGR. The interval 134-157 is disordered; it reads HDKRETEKKRDWSKEKGRLMRAKG.

Belongs to the SmpB family.

It localises to the cytoplasm. Its function is as follows. Required for rescue of stalled ribosomes mediated by trans-translation. Binds to transfer-messenger RNA (tmRNA), required for stable association of tmRNA with ribosomes. tmRNA and SmpB together mimic tRNA shape, replacing the anticodon stem-loop with SmpB. tmRNA is encoded by the ssrA gene; the 2 termini fold to resemble tRNA(Ala) and it encodes a 'tag peptide', a short internal open reading frame. During trans-translation Ala-aminoacylated tmRNA acts like a tRNA, entering the A-site of stalled ribosomes, displacing the stalled mRNA. The ribosome then switches to translate the ORF on the tmRNA; the nascent peptide is terminated with the 'tag peptide' encoded by the tmRNA and targeted for degradation. The ribosome is freed to recommence translation, which seems to be the essential function of trans-translation. This chain is SsrA-binding protein, found in Rhodopseudomonas palustris (strain BisA53).